The following is a 248-amino-acid chain: 2,3-bisphosphoglycerate-dependent phosphoglycerate mutase (248 aa).

Substrate contacts are provided by residues 8-15 (RHGESTWN), 21-22 (TG), R60, 87-90 (EKHY), K98, 114-115 (RR), and 183-184 (GN). H9 acts as the Tele-phosphohistidine intermediate in catalysis. The active-site Proton donor/acceptor is E87.

The protein belongs to the phosphoglycerate mutase family. BPG-dependent PGAM subfamily.

It carries out the reaction (2R)-2-phosphoglycerate = (2R)-3-phosphoglycerate. It participates in carbohydrate degradation; glycolysis; pyruvate from D-glyceraldehyde 3-phosphate: step 3/5. In terms of biological role, catalyzes the interconversion of 2-phosphoglycerate and 3-phosphoglycerate. The polypeptide is 2,3-bisphosphoglycerate-dependent phosphoglycerate mutase (Elusimicrobium minutum (strain Pei191)).